Consider the following 490-residue polypeptide: Solute carrier family 2, facilitated glucose transporter member 1 (490 aa).

The Cytoplasmic segment spans residues Met1–Arg10. A helical transmembrane segment spans residues Leu11 to Ile32. Residues Asn33 to Ser65 lie on the Extracellular side of the membrane. The N-linked (GlcNAc...) asparagine glycan is linked to Asn44. A helical membrane pass occupies residues Leu66–Val86. Residues Asn87–Phe89 lie on the Cytoplasmic side of the membrane. Residues Gly90–Phe111 traverse the membrane as a helical segment. Over Ser112 to Glu119 the chain is Extracellular. Residues Met120–Val143 form a helical membrane-spanning segment. At Gly144–Ala154 the chain is on the cytoplasmic side. A helical membrane pass occupies residues Leu155–Leu175. Gln160 provides a ligand contact to D-glucose. Residues Asp176–Leu184 are Extracellular-facing. The helical transmembrane segment at Trp185–Phe205 threads the bilayer. The Cytoplasmic portion of the chain corresponds to Ala206 to Pro270. A helical membrane pass occupies residues Ile271–Tyr292. D-glucose is bound by residues Gln281–Gln282 and Asn287. The Extracellular portion of the chain corresponds to Ser293–Pro305. Residues Val306 to Val327 form a helical membrane-spanning segment. A D-glucose-binding site is contributed by Asn316. The Cytoplasmic portion of the chain corresponds to Glu328–Arg333. The chain crosses the membrane as a helical span at residues Thr334–Leu354. Residues Thr355 to Ser364 lie on the Extracellular side of the membrane. The helical transmembrane segment at Tyr365–Trp387 threads the bilayer. Residues Glu379 and Trp387 each contribute to the D-glucose site. The Cytoplasmic segment spans residues Phe388–Pro400. The helical transmembrane segment at Ala401–Phe421 threads the bilayer. The Extracellular portion of the chain corresponds to Gln422–Cys428. A helical transmembrane segment spans residues Gly429–Phe449. Over Lys450–Val490 the chain is Cytoplasmic. The segment at Gly470 to Val490 is disordered.

This sequence belongs to the major facilitator superfamily. Sugar transporter (TC 2.A.1.1) family. Glucose transporter subfamily. In terms of assembly, interacts with isoform 1 of BSG. Retinal cones (at protein level).

Its subcellular location is the cell membrane. It localises to the photoreceptor inner segment. The catalysed reaction is D-glucose(out) = D-glucose(in). Facilitative glucose transporter, which is responsible for constitutive or basal glucose uptake. Has a very broad substrate specificity; can transport a wide range of aldoses including both pentoses and hexoses. Most important energy carrier of the brain: present at the blood-brain barrier and assures the energy-independent, facilitative transport of glucose into the brain. In association with BSG and NXNL1, promotes retinal cone survival by increasing glucose uptake into photoreceptors. Required for mesendoderm differentiation. This Gallus gallus (Chicken) protein is Solute carrier family 2, facilitated glucose transporter member 1.